The primary structure comprises 139 residues: MAITYQTEGIKMPDIKKRETTEWIKAVAATYEKRIGEIAYIFCSDEKILEVNRQYLQHDYYTDIITFDYCEGNRLSGDLFISLETVKTNSEQFNTPYEEELHRTIIHGILHLCGINDKGPGEREIMEAAENKALAMRKQ.

H107, H111, and D117 together coordinate Zn(2+).

This sequence belongs to the endoribonuclease YbeY family. Requires Zn(2+) as cofactor.

Its subcellular location is the cytoplasm. Its function is as follows. Single strand-specific metallo-endoribonuclease involved in late-stage 70S ribosome quality control and in maturation of the 3' terminus of the 16S rRNA. The polypeptide is Endoribonuclease YbeY (Bacteroides fragilis (strain ATCC 25285 / DSM 2151 / CCUG 4856 / JCM 11019 / LMG 10263 / NCTC 9343 / Onslow / VPI 2553 / EN-2)).